The sequence spans 403 residues: LIM/homeobox protein Lhx1 (403 aa).

LIM zinc-binding domains lie at 4–54 (CAGC…CKND) and 63–117 (CAGC…CKED). The span at 131–147 (ISVTGSDPSLSPESQDP) shows a compositional bias: polar residues. Disordered stretches follow at residues 131 to 185 (ISVT…PRTT) and 318 to 366 (PAGT…SMHS). The span at 150-166 (DDAKDSESANVSDKEAG) shows a compositional bias: basic and acidic residues. Residues 179 to 238 (RRGPRTTIKAKQLETLKAAFAATPKPTRHIREQLAQETGLNMRVIQVWFQNRRSKERRMK) constitute a DNA-binding region (homeobox).

Interacts with ldb1 via the tandem LIM domains. Both LIM domains are required for optimal binding and binding relieves the inhibitory effect of the LIM domains and activates lhx1. Binding to ldb1 also prevents degradation of ldb1 by rnf12. The stoichiometry of lhx1 and ldb1 is important for their function and an excess of ldb1 can inhibit lhx1 function. Interacts with the N-terminal region of rnf12 by a homeobox-dependent mechanism. In terms of tissue distribution, exhibits a biphasic expression pattern. Initially localized to the Spemann organizer region of gastrulae, leading to expression in prechordal mesoderm and notochord. In the second phase, expressed in the lateral mesoderm and neural plate, eventually concentrating in the pronephros and the CNS. Expressed in the pronephros primordium by late gastrula (stage 12.5) and becomes restricted to the tips of the tubules and ducts as kidney development progresses. In the CNS, becomes progressively recognizable in anatomically distinct structures during larval development. Within the forebrain, shows almost identical expression to lhx5 in the diencephalon, being expressed in alternating stripes to lhx2 and lhx9. Expressed in the diencephalic pretectum within prosomere 1, hypothalamus, ventral thalamus and zona limitans intrathalamica. In the telencephalon, the expression pattern is distinct from lhx5, being localized in the pallium and subpallium. Also expressed in the ventral territories of midbrain (mesencephalon) and hindbrain (rhombencephalon), being expressed in the mesencephalic tegmentum and hindbrain reticular formation. Also shows intense expression in the cerebellum including Purkinje cells.

Its subcellular location is the nucleus. Its function is as follows. Involved in the establishment of the body plan via the Spemann organizer during gastrulation. Transcriptional activator required to induce organizer gene expression downstream of siamois. Promotes head formation by binding to 5'-TAAT'-3' elements in the promoters of head organizer genes cer1 and gsc to stimulate expression. Binds as a complex with siamois and mix-A/mix.1 to the cer1 promoter, and with ldb1 and otx2 to the gsc promoter. Also involved in neural induction via the organizer, including a role in notochord formation. Acts synergistically with ldb1 and ssbp in subsequent axis formation. Involved in kidney development, acting synergistically with pax8 to establish the pronephric primordium in late gastrulae/early neurulae and with pax2 during pronephric morphogenesis in tailbud stages. Has a later role in mediating the activity of inhibitors of ventralization. The protein is LIM/homeobox protein Lhx1 (lhx1) of Xenopus laevis (African clawed frog).